The primary structure comprises 152 residues: uncharacterized protein (152 aa).

A run of 5 helical transmembrane segments spans residues 2-22 (GVVF…LKLM), 33-53 (LKMI…WLIM), 58-78 (FLIE…LIYL), 97-117 (FMGN…IEYV), and 122-142 (IASP…FFNC).

The protein resides in the cell membrane. This is an uncharacterized protein from Methanocaldococcus jannaschii (strain ATCC 43067 / DSM 2661 / JAL-1 / JCM 10045 / NBRC 100440) (Methanococcus jannaschii).